The primary structure comprises 239 residues: tRNA (guanine-N(7)-)-methyltransferase (239 aa).

4 residues coordinate S-adenosyl-L-methionine: Glu-69, Glu-94, Asp-121, and Asp-144. Asp-144 is a catalytic residue. Residue Lys-148 coordinates substrate. Residues 150 to 155 form an interaction with RNA region; the sequence is RHNKRR. Substrate is bound by residues Asp-180 and 217–220; that span reads TKFE.

It belongs to the class I-like SAM-binding methyltransferase superfamily. TrmB family. Monomer.

It carries out the reaction guanosine(46) in tRNA + S-adenosyl-L-methionine = N(7)-methylguanosine(46) in tRNA + S-adenosyl-L-homocysteine. The protein operates within tRNA modification; N(7)-methylguanine-tRNA biosynthesis. In terms of biological role, catalyzes the formation of N(7)-methylguanine at position 46 (m7G46) in tRNA. The sequence is that of tRNA (guanine-N(7)-)-methyltransferase from Cronobacter sakazakii (strain ATCC BAA-894) (Enterobacter sakazakii).